A 509-amino-acid polypeptide reads, in one-letter code: MSIKTEEISSLIKKQLEGYQDDLAAEEVGTVTYIGDGIARATGLENAMANELLQFSNGSYGMALNLETNDVGIIILGDFDEIREGDQVKRTGRIMEVPVGDAMIGRVVNSLGQPVDGLGAIKTDKTRPIEFKAPGVMQRKSVSEPLQTGLKAIDALVPIGRGQRELIIGDRKTGKTSIAIDTILNQKDQNMICVYVAIGQKDSTVRAQVETLKKYGAMDYTIVLTAGPSEPAPMLYIAPYAGAAMGEEFMYNGKHVLIVYDDLSKQATSYRELSLLLRRPPGREAYPGDIFYTHSRLLERAAKLSDKLGGGSMTALPVIETQAGDISAYIPTNVISITDGQIFLQSDLFYAGTRPAIDAGASVSRVGGDAQVKAMKKVAGTLRLDLASFRELEAFTQFGSDLDAATQAKLNRGRRTVEVLKQPVHKPLPVEKQVIILYALTHGFLDPIPIEDITRFQDELFDFFDSNAADLLKQIRDTGNLPDTDKLDAQIKAFAGGFQTSKQLAAAKD.

169–176 (GDRKTGKT) contributes to the ATP binding site.

It belongs to the ATPase alpha/beta chains family. In terms of assembly, F-type ATPases have 2 components, CF(1) - the catalytic core - and CF(0) - the membrane proton channel. CF(1) has five subunits: alpha(3), beta(3), gamma(1), delta(1), epsilon(1). CF(0) has three main subunits: a(1), b(2) and c(9-12). The alpha and beta chains form an alternating ring which encloses part of the gamma chain. CF(1) is attached to CF(0) by a central stalk formed by the gamma and epsilon chains, while a peripheral stalk is formed by the delta and b chains.

It localises to the cell membrane. It carries out the reaction ATP + H2O + 4 H(+)(in) = ADP + phosphate + 5 H(+)(out). Functionally, produces ATP from ADP in the presence of a proton gradient across the membrane. The alpha chain is a regulatory subunit. This is ATP synthase subunit alpha from Lacticaseibacillus casei (strain BL23) (Lactobacillus casei).